The chain runs to 356 residues: S-adenosylmethionine:tRNA ribosyltransferase-isomerase (356 aa).

This sequence belongs to the QueA family. As to quaternary structure, monomer.

It localises to the cytoplasm. It catalyses the reaction 7-aminomethyl-7-carbaguanosine(34) in tRNA + S-adenosyl-L-methionine = epoxyqueuosine(34) in tRNA + adenine + L-methionine + 2 H(+). It functions in the pathway tRNA modification; tRNA-queuosine biosynthesis. Transfers and isomerizes the ribose moiety from AdoMet to the 7-aminomethyl group of 7-deazaguanine (preQ1-tRNA) to give epoxyqueuosine (oQ-tRNA). The chain is S-adenosylmethionine:tRNA ribosyltransferase-isomerase from Escherichia fergusonii (strain ATCC 35469 / DSM 13698 / CCUG 18766 / IAM 14443 / JCM 21226 / LMG 7866 / NBRC 102419 / NCTC 12128 / CDC 0568-73).